Consider the following 164-residue polypeptide: UPF0304 protein KPK_1463 (164 aa).

This sequence belongs to the UPF0304 family.

The protein is UPF0304 protein KPK_1463 of Klebsiella pneumoniae (strain 342).